Here is a 466-residue protein sequence, read N- to C-terminus: Putative D-3-phosphoglycerate dehydrogenase (466 aa).

Residues 1-15 are compositionally biased toward basic and acidic residues; that stretch reads MDIKGGRRGNVEDSL. The disordered stretch occupies residues 1 to 26; that stretch reads MDIKGGRRGNVEDSLNKLSLSPPDNN. The segment covering 16 to 26 has biased composition (polar residues); that stretch reads NKLSLSPPDNN. S87 carries the phosphoserine modification. NAD(+)-binding positions include 205–206 and D225; that span reads HI. A Phosphoserine modification is found at S258. NAD(+) is bound by residues 282-284 and D308; that span reads ASR. R284 is an active-site residue. E313 is an active-site residue. H344 acts as the Proton donor in catalysis. An NAD(+)-binding site is contributed by 344 to 347; the sequence is HIGG. The 71-residue stretch at 396-466 folds into the ACT domain; that stretch reads RVLFVHRNVP…PCKINTRLLY (71 aa).

The protein belongs to the D-isomer specific 2-hydroxyacid dehydrogenase family.

It catalyses the reaction (2R)-3-phosphoglycerate + NAD(+) = 3-phosphooxypyruvate + NADH + H(+). The catalysed reaction is (R)-2-hydroxyglutarate + NAD(+) = 2-oxoglutarate + NADH + H(+). Its pathway is amino-acid biosynthesis; L-serine biosynthesis; L-serine from 3-phospho-D-glycerate: step 1/3. Functionally, catalyzes the reversible oxidation of 3-phospho-D-glycerate to 3-phosphonooxypyruvate, the first step of the phosphorylated L-serine biosynthesis pathway. Also catalyzes the reversible oxidation of 2-hydroxyglutarate to 2-oxoglutarate. This chain is Putative D-3-phosphoglycerate dehydrogenase, found in Schizosaccharomyces pombe (strain 972 / ATCC 24843) (Fission yeast).